The chain runs to 239 residues: Purine nucleoside phosphorylase DeoD-type 1 (239 aa).

His-5 is a binding site for a purine D-ribonucleoside. Phosphate contacts are provided by residues Gly-21, Arg-25, Arg-44, and 88–91; that span reads RVGS. A purine D-ribonucleoside contacts are provided by residues 180–182 and 204–205; these read EME and SD. Catalysis depends on Asp-205, which acts as the Proton donor.

Belongs to the PNP/UDP phosphorylase family. As to quaternary structure, homohexamer; trimer of homodimers.

The enzyme catalyses a purine D-ribonucleoside + phosphate = a purine nucleobase + alpha-D-ribose 1-phosphate. It carries out the reaction a purine 2'-deoxy-D-ribonucleoside + phosphate = a purine nucleobase + 2-deoxy-alpha-D-ribose 1-phosphate. In terms of biological role, catalyzes the reversible phosphorolytic breakdown of the N-glycosidic bond in the beta-(deoxy)ribonucleoside molecules, with the formation of the corresponding free purine bases and pentose-1-phosphate. In Vibrio parahaemolyticus serotype O3:K6 (strain RIMD 2210633), this protein is Purine nucleoside phosphorylase DeoD-type 1.